An 85-amino-acid polypeptide reads, in one-letter code: Large ribosomal subunit protein bL31 (85 aa).

Residues 64–85 (KYGMSESQGAGGKGNAKKKDEK) are disordered.

It belongs to the bacterial ribosomal protein bL31 family. Type A subfamily. As to quaternary structure, part of the 50S ribosomal subunit.

Functionally, binds the 23S rRNA. The protein is Large ribosomal subunit protein bL31 of Acaryochloris marina (strain MBIC 11017).